A 1004-amino-acid chain; its full sequence is Kinesin-like protein KIN-14R (1004 aa).

Disordered stretches follow at residues 1 to 21 (MEEE…RIGD), 61 to 90 (PYVD…MQHD), and 110 to 169 (ELFS…ATMG). Acidic residues predominate over residues 63-75 (VDDDDDGNSEEEN). A compositionally biased stretch (pro residues) spans 115–125 (PSPPQGPPSPS). Coiled-coil stretches lie at residues 189–230 (CGQL…AQAS) and 266–338 (LNDL…LYNK). A Kinesin motor domain is found at 345–671 (NIRVFCRCRP…LNFASRVRGI (327 aa)). Residue 428–435 (GQTGTGKT) participates in ATP binding. The stretch at 691–742 (MAGRAKQDSKNKDAQIKSMEETIQSLEAKNKAKDLLTMNLQEKIKELEAQLL) forms a coiled coil. Disordered regions lie at residues 759 to 791 (DHLH…STAE) and 946 to 1004 (SGRR…RQLN). A compositionally biased stretch (low complexity) spans 948–958 (RRAGAGVAGTT). Residues 995-1004 (NNGTSLRQLN) show a composition bias toward polar residues.

This sequence belongs to the TRAFAC class myosin-kinesin ATPase superfamily. Kinesin family. KIN-14 subfamily.

In Oryza sativa subsp. japonica (Rice), this protein is Kinesin-like protein KIN-14R.